A 128-amino-acid polypeptide reads, in one-letter code: Transmembrane protein 234 homolog (128 aa).

Helical transmembrane passes span T3–I23, P53–L73, L80–L100, and V104–V124.

This sequence belongs to the TMEM234 family.

It is found in the membrane. The polypeptide is Transmembrane protein 234 homolog (Dictyostelium discoideum (Social amoeba)).